Reading from the N-terminus, the 76-residue chain is Exodeoxyribonuclease 7 small subunit (76 aa).

It belongs to the XseB family. As to quaternary structure, heterooligomer composed of large and small subunits.

The protein resides in the cytoplasm. It carries out the reaction Exonucleolytic cleavage in either 5'- to 3'- or 3'- to 5'-direction to yield nucleoside 5'-phosphates.. In terms of biological role, bidirectionally degrades single-stranded DNA into large acid-insoluble oligonucleotides, which are then degraded further into small acid-soluble oligonucleotides. The chain is Exodeoxyribonuclease 7 small subunit from Staphylococcus haemolyticus (strain JCSC1435).